Consider the following 34-residue polypeptide: Photosystem II reaction center protein M (34 aa).

The helical transmembrane segment at 5 to 25 threads the bilayer; sequence ILAVIATALFVLIPTAFLLIL.

The protein belongs to the PsbM family. As to quaternary structure, PSII is composed of 1 copy each of membrane proteins PsbA, PsbB, PsbC, PsbD, PsbE, PsbF, PsbH, PsbI, PsbJ, PsbK, PsbL, PsbM, PsbT, PsbX, PsbY, PsbZ, Psb30/Ycf12, at least 3 peripheral proteins of the oxygen-evolving complex and a large number of cofactors. It forms dimeric complexes.

The protein resides in the plastid. The protein localises to the chloroplast thylakoid membrane. In terms of biological role, one of the components of the core complex of photosystem II (PSII). PSII is a light-driven water:plastoquinone oxidoreductase that uses light energy to abstract electrons from H(2)O, generating O(2) and a proton gradient subsequently used for ATP formation. It consists of a core antenna complex that captures photons, and an electron transfer chain that converts photonic excitation into a charge separation. This subunit is found at the monomer-monomer interface. This chain is Photosystem II reaction center protein M, found in Chaetosphaeridium globosum (Charophycean green alga).